We begin with the raw amino-acid sequence, 361 residues long: Oxidoreductase lepF (361 aa).

Residues 257 to 277 (MLMLVLQAVLLPVFYVVAMPL) traverse the membrane as a helical segment.

It belongs to the NmrA-type oxidoreductase family.

The protein resides in the membrane. Functionally, oxidoreductase; part of the gene cluster 23 that mediates the biosynthesis of a family of 2-pyridones known as leporins. The hybrid PKS-NRPS synthetase lepA and the enoyl reductase lepG are responsible for fusion of phenylalanine with a hexaketide and subsequent release of the stable tetramic acid precursor, pre-leporin C. Because lepA lacks a designated enoylreductase (ER) domain, the required activity is provided the enoyl reductase lepG. It is possible that the dehydrogenase lepF also participates in production of pre-leporin C. Cytochrome P450 monooxygenase lepH is then required for the ring expansion step to yield leporin C. Leporin C is then presumably further oxidized by the N-hydroxylase lepD to form leporin B. LepI may possess a function in biosynthesis upstream of lepA. Leporin B is further oxidized in the presence of ferric ion to give the leporin B trimer-iron chelate, but whether or not this reaction is catalyzed by an enzyme in the pathway or by ferric ion is not determined yet. The polypeptide is Oxidoreductase lepF (Aspergillus flavus (strain ATCC 200026 / FGSC A1120 / IAM 13836 / NRRL 3357 / JCM 12722 / SRRC 167)).